The chain runs to 311 residues: Pyrimidine-specific ribonucleoside hydrolase RihA (311 aa).

His240 is an active-site residue.

This sequence belongs to the IUNH family. RihA subfamily.

Hydrolyzes with equal efficiency cytidine or uridine to ribose and cytosine or uracil, respectively. The polypeptide is Pyrimidine-specific ribonucleoside hydrolase RihA (Escherichia fergusonii (strain ATCC 35469 / DSM 13698 / CCUG 18766 / IAM 14443 / JCM 21226 / LMG 7866 / NBRC 102419 / NCTC 12128 / CDC 0568-73)).